Reading from the N-terminus, the 302-residue chain is 1,2-dihydroxynaphthalene dioxygenase (302 aa).

VOC domains are found at residues 9-124 and 149-270; these read ELGY…IFWG and GLGH…PGWR. Fe cation is bound at residue His152. Substrate-binding positions include His152, 199 to 200, His215, and Tyr256; that span reads DH. His215 lines the Fe cation pocket. Glu266 contributes to the Fe cation binding site.

This sequence belongs to the extradiol ring-cleavage dioxygenase family. Requires Fe(2+) as cofactor.

It catalyses the reaction naphthalene-1,2-diol + O2 = 2-hydroxychromene-2-carboxylate + H(+). The protein operates within aromatic compound metabolism; naphthalene degradation. With respect to regulation, inhibited by bathophenanthroline sulfonate, o-phenanthroline, 8-hydroxyquinoline, 2,2'-dipyridyl and p-chlormercuribenzoate. Also inhibited by Hg(2+), Cu(2+), Co(2+) and Fe(3+) ions. Its function is as follows. Involved in the naphthalene catabolic pathway. Catalyzes the meta-cleavage of 1,2-dihydroxynaphthalene (1,2-DHN) to yield 2-hydroxychromene-2-carboxylic acid. Can also cleave 3-methylcatechol and 4-methylcatechol. The protein is 1,2-dihydroxynaphthalene dioxygenase (nahC) of Pseudomonas putida (Arthrobacter siderocapsulatus).